The sequence spans 155 residues: Endoribonuclease YbeY (155 aa).

Zn(2+) is bound by residues His120, His124, and His130.

This sequence belongs to the endoribonuclease YbeY family. Zn(2+) is required as a cofactor.

Its subcellular location is the cytoplasm. Its function is as follows. Single strand-specific metallo-endoribonuclease involved in late-stage 70S ribosome quality control and in maturation of the 3' terminus of the 16S rRNA. In Staphylococcus aureus (strain bovine RF122 / ET3-1), this protein is Endoribonuclease YbeY.